A 153-amino-acid chain; its full sequence is Ribosomal RNA large subunit methyltransferase H (153 aa).

S-adenosyl-L-methionine-binding residues include L71 and G102.

This sequence belongs to the RNA methyltransferase RlmH family. Homodimer.

Its subcellular location is the cytoplasm. It carries out the reaction pseudouridine(1915) in 23S rRNA + S-adenosyl-L-methionine = N(3)-methylpseudouridine(1915) in 23S rRNA + S-adenosyl-L-homocysteine + H(+). Its function is as follows. Specifically methylates the pseudouridine at position 1915 (m3Psi1915) in 23S rRNA. In Anaeromyxobacter dehalogenans (strain 2CP-1 / ATCC BAA-258), this protein is Ribosomal RNA large subunit methyltransferase H.